The primary structure comprises 169 residues: Styrene-oxide isomerase (169 aa).

4 consecutive transmembrane segments (helical) span residues 13 to 33 (GILM…HLVG), 61 to 81 (PALN…LGFA), 85 to 105 (PHLL…FYFF), and 129 to 149 (FLAL…LAVI).

It localises to the membrane. It carries out the reaction styrene oxide = 2-phenylacetaldehyde. It participates in aromatic compound metabolism. Its function is as follows. Epoxystyrene isomerase that catalyzes the second step in the aerobic styrene degradation pathway by converting epoxystyrene to phenylacetaldehyde. The sequence is that of Styrene-oxide isomerase (styC) from Pseudomonas fluorescens.